The following is a 125-amino-acid chain: Holo-[acyl-carrier-protein] synthase (125 aa).

The Mg(2+) site is built by aspartate 8 and glutamate 57.

It belongs to the P-Pant transferase superfamily. AcpS family. The cofactor is Mg(2+).

It localises to the cytoplasm. The catalysed reaction is apo-[ACP] + CoA = holo-[ACP] + adenosine 3',5'-bisphosphate + H(+). Its function is as follows. Transfers the 4'-phosphopantetheine moiety from coenzyme A to a Ser of acyl-carrier-protein. This Thermus thermophilus (strain ATCC BAA-163 / DSM 7039 / HB27) protein is Holo-[acyl-carrier-protein] synthase.